The primary structure comprises 118 residues: V-type proton ATPase subunit G 1 (118 aa).

Ala-2 carries the post-translational modification N-acetylalanine. The tract at residues 25 to 90 (ARKRKARRLK…VQGMQSSQQR (66 aa)) is disordered. Residues 35–56 (QAKEEAQMEVEQYRREREHEFQ) are compositionally biased toward basic and acidic residues. 2 stretches are compositionally biased toward polar residues: residues 57–69 (SKQQAAMGSQGNL) and 78–89 (RHQVQGMQSSQQ).

Belongs to the V-ATPase G subunit family. As to quaternary structure, V-ATPase is a heteromultimeric enzyme made up of two complexes: the ATP-hydrolytic V1 complex and the proton translocation V0 complex. The V1 complex consists of three catalytic AB heterodimers that form a heterohexamer, three peripheral stalks each consisting of EG heterodimers, one central rotor including subunits D and F, and the regulatory subunits C and H. The proton translocation complex V0 consists of the proton transport subunit a, a ring of proteolipid subunits c9c'', rotary subunit d, subunits e and f, and the accessory subunits ATP6AP1/Ac45 and ATP6AP2/PRR.

It is found in the apical cell membrane. Its function is as follows. Subunit of the V1 complex of vacuolar(H+)-ATPase (V-ATPase), a multisubunit enzyme composed of a peripheral complex (V1) that hydrolyzes ATP and a membrane integral complex (V0) that translocates protons. V-ATPase is responsible for acidifying and maintaining the pH of intracellular compartments and in some cell types, is targeted to the plasma membrane, where it is responsible for acidifying the extracellular environment. In aerobic conditions, involved in intracellular iron homeostasis, thus triggering the activity of Fe(2+) prolyl hydroxylase (PHD) enzymes, and leading to HIF1A hydroxylation and subsequent proteasomal degradation. The chain is V-type proton ATPase subunit G 1 (ATP6V1G1) from Pan troglodytes (Chimpanzee).